We begin with the raw amino-acid sequence, 240 residues long: Ribonuclease PH (240 aa).

Phosphate-binding positions include arginine 87 and 125–127 (GTR).

This sequence belongs to the RNase PH family. Homohexameric ring arranged as a trimer of dimers.

The enzyme catalyses tRNA(n+1) + phosphate = tRNA(n) + a ribonucleoside 5'-diphosphate. Its function is as follows. Phosphorolytic 3'-5' exoribonuclease that plays an important role in tRNA 3'-end maturation. Removes nucleotide residues following the 3'-CCA terminus of tRNAs; can also add nucleotides to the ends of RNA molecules by using nucleoside diphosphates as substrates, but this may not be physiologically important. Probably plays a role in initiation of 16S rRNA degradation (leading to ribosome degradation) during starvation. The polypeptide is Ribonuclease PH (Pseudomonas syringae pv. syringae (strain B728a)).